Consider the following 476-residue polypeptide: Aspartyl/glutamyl-tRNA(Asn/Gln) amidotransferase subunit B (476 aa).

The protein belongs to the GatB/GatE family. GatB subfamily. Heterotrimer of A, B and C subunits.

The catalysed reaction is L-glutamyl-tRNA(Gln) + L-glutamine + ATP + H2O = L-glutaminyl-tRNA(Gln) + L-glutamate + ADP + phosphate + H(+). It carries out the reaction L-aspartyl-tRNA(Asn) + L-glutamine + ATP + H2O = L-asparaginyl-tRNA(Asn) + L-glutamate + ADP + phosphate + 2 H(+). Functionally, allows the formation of correctly charged Asn-tRNA(Asn) or Gln-tRNA(Gln) through the transamidation of misacylated Asp-tRNA(Asn) or Glu-tRNA(Gln) in organisms which lack either or both of asparaginyl-tRNA or glutaminyl-tRNA synthetases. The reaction takes place in the presence of glutamine and ATP through an activated phospho-Asp-tRNA(Asn) or phospho-Glu-tRNA(Gln). The chain is Aspartyl/glutamyl-tRNA(Asn/Gln) amidotransferase subunit B from Bacillus cytotoxicus (strain DSM 22905 / CIP 110041 / 391-98 / NVH 391-98).